Reading from the N-terminus, the 147-residue chain is Ribosome-binding factor A (147 aa).

A disordered region spans residues 123 to 147; the sequence is LAKLKEGAQPAGDANPYKTSDEEED.

Belongs to the RbfA family. As to quaternary structure, monomer. Binds 30S ribosomal subunits, but not 50S ribosomal subunits or 70S ribosomes.

The protein resides in the cytoplasm. Its function is as follows. One of several proteins that assist in the late maturation steps of the functional core of the 30S ribosomal subunit. Associates with free 30S ribosomal subunits (but not with 30S subunits that are part of 70S ribosomes or polysomes). Required for efficient processing of 16S rRNA. May interact with the 5'-terminal helix region of 16S rRNA. This is Ribosome-binding factor A from Corynebacterium aurimucosum (strain ATCC 700975 / DSM 44827 / CIP 107346 / CN-1) (Corynebacterium nigricans).